Here is a 339-residue protein sequence, read N- to C-terminus: GATA transcription factor 5 (339 aa).

Disordered stretches follow at residues 68–88, 126–145, 163–206, and 221–242; these read MVRVSSEEPNDDGDALRRSSD, EYSGPNLTGTPTEKPAWLTG, PVPA…PSSP, and ERPPFPKKHKKRSAESVFSGEL. Polar residues predominate over residues 126-136; sequence EYSGPNLTGTP. Residues 167–174 carry the Nuclear localization signal motif; it reads KARSKRNR. Positions 181–206 are enriched in low complexity; it reads SLGSSSSSGPSSSGSTSSSSSGPSSP. A GATA-type zinc finger spans residues 245–299; it reads LQPQRKCSHCGVQKTPQWRAGPMGAKTLCNACGVRYKSGRLLPEYRPACSPTFSS. The interval 314-339 is disordered; sequence RKKEPTSDNETGLNQLVQSPQAVPSF. Residues 321-339 show a composition bias toward polar residues; the sequence is DNETGLNQLVQSPQAVPSF.

This sequence belongs to the type IV zinc-finger family. Class A subfamily.

The protein resides in the nucleus. Its function is as follows. Transcriptional activator that specifically binds 5'-GATA-3' or 5'-GAT-3' motifs within gene promoters. May be involved in the regulation of some light-responsive genes. The protein is GATA transcription factor 5 (GATA5) of Arabidopsis thaliana (Mouse-ear cress).